The chain runs to 513 residues: TRAF3-interacting JNK-activating modulator (513 aa).

3 disordered regions span residues 1 to 96, 130 to 171, and 381 to 402; these read MISS…GQVS, SSGI…KAEE, and SLQG…QLKK. Residues 1-485 lie on the Cytoplasmic side of the membrane; that stretch reads MISSDSRSSP…QLQVKENELQ (485 aa). Composition is skewed to basic and acidic residues over residues 17–31 and 69–79; these read ESYE…ETRE and RNLEEEKKGQA. The stretch at 266 to 488 forms a coiled coil; that stretch reads MKKVLLEMED…VKENELQCGQ (223 aa). The segment covering 386–397 has biased composition (polar residues); it reads GEQQSSETQDLQ. A helical; Anchor for type IV membrane protein membrane pass occupies residues 486 to 506; sequence CGQWLPVLMVVIATALAVFLA. The Extracellular portion of the chain corresponds to 507-513; that stretch reads NKGNLVI.

Interacts (via its coiled-coil domain) with TRAF3 (via isoleucine zipper). Interacts with MAP2K1. Interacts with PPP2CA; this interaction targets PPP2CA to the lysosomes. Interacts with MAVS. Interacts with TBK1. Expressed in bone marrow, spleen and thymus. Not detected in heart, kidney and liver.

It is found in the cell membrane. The protein localises to the golgi apparatus membrane. It localises to the lysosome membrane. The protein resides in the mitochondrion outer membrane. Its function is as follows. Adapter protein that plays essential roles in both innate and adaptive immunity. Plays a crucial role in the regulation of thymocyte development. Mechanistically, mediates TCR-stimulated activation through recruiting MAP2K1/MEK1 to the Golgi and, thereby, facilitating the interaction of MAP2K1/MEK1 with its activator BRAF. Also plays an essential role in regulatory T-cell stability and function by recruiting the serine-threonine phosphatase catalytic subunit (PPP2CA) to the lysosome, thereby facilitating the interaction of PP2Ac with the mTORC1 component RPTOR and restricting glycolytic metabolism. Positively regulates TLR4 signaling activity in macrophage-mediated inflammation by acting as a molecular clamp to facilitate LPS-induced translocation of TLR4 to lipid rafts. In response to viral infection, facilitates the recruitment of TRAF3 to MAVS within mitochondria leading to IRF3 activation and interferon production. However, participates in the maintenance of immune homeostasis and the prevention of overzealous innate immunity by promoting 'Lys-48'-dependent ubiquitination of TBK1. This is TRAF3-interacting JNK-activating modulator (Traf3ip3) from Mus musculus (Mouse).